The sequence spans 298 residues: 3-deoxy-manno-octulosonate cytidylyltransferase (298 aa).

Residues 22–42 (VWVLHGLALGAAAAAAAVAYL) traverse the membrane as a helical segment.

The protein belongs to the KdsB family. The cofactor is Mg(2+). As to expression, ubiquitous.

The protein resides in the membrane. The enzyme catalyses 3-deoxy-alpha-D-manno-oct-2-ulosonate + CTP = CMP-3-deoxy-beta-D-manno-octulosonate + diphosphate. It functions in the pathway nucleotide-sugar biosynthesis; CMP-3-deoxy-D-manno-octulosonate biosynthesis; CMP-3-deoxy-D-manno-octulosonate from 3-deoxy-D-manno-octulosonate and CTP: step 1/1. In terms of biological role, catalyzes the production of the sugar nucleotide CMP-3-deoxy-D-manno-octulosonate (CMP-KDO). CTP is the preferred nucleotide donor, and it can partially be replaced with UTP but not with ATP. Activates KDO during the biosynthesis of rhamnogalacturonan II (RG-II), a structurally complex pectic polysaccharide of the primary cell wall. RG-II is essential for the cell wall integrity of rapidly growing tissues and pollen tube growth and elongation. This Zea mays (Maize) protein is 3-deoxy-manno-octulosonate cytidylyltransferase.